Here is a 572-residue protein sequence, read N- to C-terminus: Formate--tetrahydrofolate ligase (572 aa).

81 to 88 serves as a coordination point for ATP; it reads TPAGEGKT.

This sequence belongs to the formate--tetrahydrofolate ligase family.

The enzyme catalyses (6S)-5,6,7,8-tetrahydrofolate + formate + ATP = (6R)-10-formyltetrahydrofolate + ADP + phosphate. It participates in one-carbon metabolism; tetrahydrofolate interconversion. The sequence is that of Formate--tetrahydrofolate ligase from Granulibacter bethesdensis (strain ATCC BAA-1260 / CGDNIH1).